Here is a 185-residue protein sequence, read N- to C-terminus: uncharacterized protein (185 aa).

It to M.thermoautotrophicum MTH236.

This is an uncharacterized protein from Methanocaldococcus jannaschii (strain ATCC 43067 / DSM 2661 / JAL-1 / JCM 10045 / NBRC 100440) (Methanococcus jannaschii).